The chain runs to 25 residues: ADDDLEGFSEEDLKAIKEHRAGLAA.

Belongs to the non-disulfide-bridged peptide (NDBP) superfamily. Expressed by the venom gland.

The protein resides in the secreted. Functionally, unknown. Is not toxic to mammals. In Tityus pachyurus (Colombian scorpion), this protein is Toxin Tpa3.